Reading from the N-terminus, the 187-residue chain is MATPTFDLADLKRRMQGAVNALKHDLGSLRTGRASPTLLDPIQIEAYGAVMPMAQVATISVPEPRLLSVAVWDRGMVSAVEKAIRESDLGLNPMTEGQTIRLRIPEMSEQRRKEMVKVAHKYAEEARVAVRHVRRDGLDLLKKLEKDGAISQDDEKRQADQVQKITDQHIAEVDQTLAAKEKEIMQV.

This sequence belongs to the RRF family.

It is found in the cytoplasm. Its function is as follows. Responsible for the release of ribosomes from messenger RNA at the termination of protein biosynthesis. May increase the efficiency of translation by recycling ribosomes from one round of translation to another. The chain is Ribosome-recycling factor from Methylobacterium nodulans (strain LMG 21967 / CNCM I-2342 / ORS 2060).